We begin with the raw amino-acid sequence, 90 residues long: Small ribosomal subunit protein mS37 (90 aa).

Cys27 and Cys58 are oxidised to a cystine.

Belongs to the mitochondrion-specific ribosomal protein mS37 family. In terms of assembly, component of the mitochondrial small ribosomal subunit (mt-SSU). Mature N.crassa 74S mitochondrial ribosomes consist of a small (37S) and a large (54S) subunit. The 37S small subunit contains a 16S ribosomal RNA (16S mt-rRNA) and 32 different proteins. The 54S large subunit contains a 23S rRNA (23S mt-rRNA) and 42 different proteins.

Its subcellular location is the mitochondrion. Component of the mitochondrial ribosome (mitoribosome), a dedicated translation machinery responsible for the synthesis of mitochondrial genome-encoded proteins, including at least some of the essential transmembrane subunits of the mitochondrial respiratory chain. The mitoribosomes are attached to the mitochondrial inner membrane and translation products are cotranslationally integrated into the membrane. This is Small ribosomal subunit protein mS37 (mrp10) from Neurospora crassa (strain ATCC 24698 / 74-OR23-1A / CBS 708.71 / DSM 1257 / FGSC 987).